The sequence spans 178 residues: Caveolin-1 (178 aa).

At S2 the chain carries N-acetylserine. S2 is modified (phosphoserine). Residues S2–V94 are required for homooligomerization. Residues S2–S104 lie on the Cytoplasmic side of the membrane. Residue K5 is modified to N6-acetyllysine; alternate. K5 participates in a covalent cross-link: Glycyl lysine isopeptide (Lys-Gly) (interchain with G-Cter in ubiquitin); alternate. Y6 carries the post-translational modification Phosphotyrosine. A Phosphoserine modification is found at S9. Y14 is modified (phosphotyrosine; by ABL1). Phosphotyrosine is present on Y25. Residues K26, K30, K39, K47, and K57 each participate in a glycyl lysine isopeptide (Lys-Gly) (interchain with G-Cter in ubiquitin) cross-link. The tract at residues D82–V94 is interaction with CAVIN3. Residues A105–L125 constitute an intramembrane region (helical). At H126–I178 the chain is on the cytoplasmic side. Residues V131–Q142 form an interacts with SPRY1, SPRY2, SPRY3 and SPRY4 region. 3 S-palmitoyl cysteine lipidation sites follow: C133, C143, and C156. The interval S149–F160 is interacts with SPRY1, SPRY2, and SPRY4. An interacts with SPRY1, SPRY2, SPRY3 and SPRY4 region spans residues F167–I178.

The protein belongs to the caveolin family. In terms of assembly, homooligomer. Interacts with GLIPR2. Interacts with NOSTRIN. Interacts with SNAP25 and STX1A. Interacts (via the N-terminus) with DPP4; the interaction is direct. Interacts with CTNNB1, CDH1 and JUP. Interacts with PACSIN2; this interaction induces membrane tubulation. Interacts with SLC7A9. Interacts with BMX and BTK. Interacts with TGFBR1. Interacts with CAVIN3 (via leucine-zipper domain) in a cholesterol-sensitive manner. Interacts with CAVIN1. Interacts with EHD2 in a cholesterol-dependent manner. Forms a ternary complex with UBXN6 and VCP; mediates CAV1 targeting to lysosomes for degradation. Interacts with ABCG1; this interaction regulates ABCG1-mediated cholesterol efflux. Interacts with NEU3; this interaction enhances NEU3 sialidase activity within caveola. Interacts (via C-terminus) with SPRY1, SPRY2 (via C-terminus), SPRY3, and SPRY4. Interacts with IGFBP5; this interaction allows trafficking of IGFBP5 from the plasma membrane to the nucleus. Post-translationally, phosphorylated at Tyr-14 by ABL1 in response to oxidative stress. Ubiquitinated. Undergo monoubiquitination and multi- and/or polyubiquitination. Monoubiquitination of N-terminal lysines promotes integration in a ternary complex with UBXN6 and VCP which promotes oligomeric CAV1 targeting to lysosomes for degradation. Ubiquitinated by ZNRF1; leading to degradation and modulation of the TLR4-mediated immune response.

It localises to the golgi apparatus membrane. The protein resides in the cell membrane. The protein localises to the membrane. Its subcellular location is the caveola. It is found in the membrane raft. Its function is as follows. May act as a scaffolding protein within caveolar membranes. Forms a stable heterooligomeric complex with CAV2 that targets to lipid rafts and drives caveolae formation. Mediates the recruitment of CAVIN proteins (CAVIN1/2/3/4) to the caveolae. Interacts directly with G-protein alpha subunits and can functionally regulate their activity. Involved in the costimulatory signal essential for T-cell receptor (TCR)-mediated T-cell activation. Its binding to DPP4 induces T-cell proliferation and NF-kappa-B activation in a T-cell receptor/CD3-dependent manner. Recruits CTNNB1 to caveolar membranes and may regulate CTNNB1-mediated signaling through the Wnt pathway. Negatively regulates TGFB1-mediated activation of SMAD2/3 by mediating the internalization of TGFBR1 from membrane rafts leading to its subsequent degradation. Binds 20(S)-hydroxycholesterol (20(S)-OHC). The polypeptide is Caveolin-1 (CAV1) (Didelphis virginiana (North American opossum)).